The chain runs to 531 residues: Retinoid isomerohydrolase (531 aa).

Residue Cys-112 is the site of S-palmitoyl cysteine; in membrane form attachment. 3 residues coordinate Fe cation: His-180, His-241, and His-313. A lipid anchor (S-palmitoyl cysteine; in membrane form) is attached at Cys-329. His-526 lines the Fe cation pocket.

This sequence belongs to the carotenoid oxygenase family. Fe(2+) is required as a cofactor. Palmitoylated. As to expression, retinal pigment epithelium-specific.

It is found in the cytoplasm. It localises to the cell membrane. It carries out the reaction an all-trans-retinyl ester + H2O = 11-cis-retinol + a fatty acid + H(+). It catalyses the reaction lutein = (3R,3'S)-zeaxanthin. The enzyme catalyses all-trans-retinyl hexadecanoate + H2O = 11-cis-retinol + hexadecanoate + H(+). Plays important roles in the production of 11-cis retinal and in visual pigment regeneration. Capable of catalyzing the isomerization of lutein to meso-zeaxanthin an eye-specific carotenoid. This Danio rerio (Zebrafish) protein is Retinoid isomerohydrolase (rpe65a).